Here is a 213-residue protein sequence, read N- to C-terminus: MRVRKRKGAEEHLANHPQYVILEPEAAKGKWHQIFGNDNPIHIEVGSGKGAFITGMAQQNPDINYIGIDIQLSVLSYALDKVLASGVENVKLLRVDGSALTNYFEDGEVDMMYLNFSDPWPKSRHEKRRLTYKTFLDTYKQILPKNGEIHLKTDNRGFFEYSLTSFSQYGMILNKVWLDLHASDYEGNVMTEYERKFSEKGQAIYRVEAQFKD.

Residues Glu44, Asp69, Asp96, and Asp118 each coordinate S-adenosyl-L-methionine. Residue Asp118 is part of the active site. Residue Lys122 coordinates substrate. The interaction with RNA stretch occupies residues 124-129 (RHEKRR). Substrate contacts are provided by residues Asp154 and 191 to 194 (TEYE).

Belongs to the class I-like SAM-binding methyltransferase superfamily. TrmB family.

The catalysed reaction is guanosine(46) in tRNA + S-adenosyl-L-methionine = N(7)-methylguanosine(46) in tRNA + S-adenosyl-L-homocysteine. It functions in the pathway tRNA modification; N(7)-methylguanine-tRNA biosynthesis. Catalyzes the formation of N(7)-methylguanine at position 46 (m7G46) in tRNA. The sequence is that of tRNA (guanine-N(7)-)-methyltransferase from Streptococcus thermophilus (strain CNRZ 1066).